A 277-amino-acid polypeptide reads, in one-letter code: Cation-dependent mannose-6-phosphate receptor (277 aa).

The N-terminal stretch at 1-26 is a signal peptide; that stretch reads MFPFYSCWRTGLLLLLLAVAVRESWQ. Topologically, residues 27–185 are lumenal; sequence TEEKTCDLVG…SLACSPEISH (159 aa). The MRH domain maps to 30–181; the sequence is KTCDLVGEKG…EMDSSLACSP (152 aa). Cys-32 and Cys-78 form a disulfide bridge. Residues Asn-57, Asn-83, Asn-94, Asn-107, and Asn-113 are each glycosylated (N-linked (GlcNAc...) asparagine). Cystine bridges form between Cys-132–Cys-167 and Cys-145–Cys-179. The helical transmembrane segment at 186-210 threads the bilayer; that stretch reads LSVGSILLVTFASLVAVYVVGGFLY. The Cytoplasmic portion of the chain corresponds to 211 to 277; the sequence is QRLVVGAKGM…EERDDHLLPM (67 aa). The segment at 256–277 is disordered; sequence RGVGDDQLGEESEERDDHLLPM. A Phosphoserine modification is found at Ser-267.

In terms of assembly, homodimer. Binds GGA1, GGA2 and GGA3.

Its subcellular location is the lysosome membrane. Transport of phosphorylated lysosomal enzymes from the Golgi complex and the cell surface to lysosomes. Lysosomal enzymes bearing phosphomannosyl residues bind specifically to mannose-6-phosphate receptors in the Golgi apparatus and the resulting receptor-ligand complex is transported to an acidic prelyosomal compartment where the low pH mediates the dissociation of the complex. The chain is Cation-dependent mannose-6-phosphate receptor (M6PR) from Homo sapiens (Human).